Consider the following 1068-residue polypeptide: Phosphatidylinositol 4,5-bisphosphate 3-kinase catalytic subunit alpha isoform (1068 aa).

Residues 16–105 (MPPRILVECL…QPFLKVIEPV (90 aa)) form the PI3K-ABD domain. The PI3K-RBD domain occupies 187–289 (KGQIIVVIWV…GRMPNLMLMA (103 aa)). A C2 PI3K-type domain is found at 330-487 (INSALRIKIL…DWFSSVVKFP (158 aa)). One can recognise a PIK helical domain in the interval 517 to 694 (LARDNELREN…GLLLESYCRA (178 aa)). The region spanning 765–1051 (RLEECRIMSS…QMNDAHHGGW (287 aa)) is the PI3K/PI4K catalytic domain. Residues 771 to 777 (IMSSAKR) are G-loop. Positions 912–920 (GIGDRHNSN) are catalytic loop. The activation loop stretch occupies residues 931–957 (HIDFGHFLDHKKKKFGYKRERVPFVLT).

It belongs to the PI3/PI4-kinase family. As to quaternary structure, heterodimer of a catalytic subunit PIK3CA and a p85 regulatory subunit (PIK3R1, PIK3R2 or PIK3R3). Interacts with IRS1 in nuclear extracts. Interacts with RUFY3. Interacts with RASD2. Interacts with APPL1. Interacts with HRAS and KRAS. Interaction with HRAS/KRAS is required for PI3K pathway signaling and cell proliferation stimulated by EGF and FGF2. Interacts with FAM83B; activates the PI3K/AKT signaling cascade.

The catalysed reaction is L-seryl-[protein] + ATP = O-phospho-L-seryl-[protein] + ADP + H(+). The enzyme catalyses a 1,2-diacyl-sn-glycero-3-phospho-(1D-myo-inositol) + ATP = a 1,2-diacyl-sn-glycero-3-phospho-(1D-myo-inositol-3-phosphate) + ADP + H(+). It catalyses the reaction a 1,2-diacyl-sn-glycero-3-phospho-(1D-myo-inositol-4,5-bisphosphate) + ATP = a 1,2-diacyl-sn-glycero-3-phospho-(1D-myo-inositol-3,4,5-trisphosphate) + ADP + H(+). It carries out the reaction 1,2-dioctanoyl-sn-glycero-3-phospho-(1D-myo-inositol-4,5-bisphosphate) + ATP = 1,2-dioctanoyl-sn-glycero-3-phospho-(1D-myo-inositol-3,4,5-trisphosphate) + ADP + H(+). The catalysed reaction is 1-octadecanoyl-2-(5Z,8Z,11Z,14Z)-eicosatetraenoyl-sn-glycero-3-phospho-1D-myo-inositol 4,5-bisphosphate + ATP = 1-octadecanoyl-2-(5Z,8Z,11Z,14Z-eicosatetraenoyl)-sn-glycero-3-phospho-(1D-myo-inositol 3,4,5-triphosphate) + ADP + H(+). It participates in phospholipid metabolism; phosphatidylinositol phosphate biosynthesis. Its function is as follows. Phosphoinositide-3-kinase (PI3K) phosphorylates phosphatidylinositol (PI) and its phosphorylated derivatives at position 3 of the inositol ring to produce 3-phosphoinositides. Uses ATP and PtdIns(4,5)P2 (phosphatidylinositol 4,5-bisphosphate) to generate phosphatidylinositol 3,4,5-trisphosphate (PIP3). PIP3 plays a key role by recruiting PH domain-containing proteins to the membrane, including AKT1 and PDPK1, activating signaling cascades involved in cell growth, survival, proliferation, motility and morphology. Participates in cellular signaling in response to various growth factors. Involved in the activation of AKT1 upon stimulation by receptor tyrosine kinases ligands such as EGF, insulin, IGF1, VEGFA and PDGF. Involved in signaling via insulin-receptor substrate (IRS) proteins. Essential in endothelial cell migration during vascular development through VEGFA signaling, possibly by regulating RhoA activity. Required for lymphatic vasculature development, possibly by binding to RAS and by activation by EGF and FGF2, but not by PDGF. Regulates invadopodia formation through the PDPK1-AKT1 pathway. Participates in cardiomyogenesis in embryonic stem cells through a AKT1 pathway. Participates in vasculogenesis in embryonic stem cells through PDK1 and protein kinase C pathway. In addition to its lipid kinase activity, it displays a serine-protein kinase activity that results in the autophosphorylation of the p85alpha regulatory subunit as well as phosphorylation of other proteins such as 4EBP1, H-Ras, the IL-3 beta c receptor and possibly others. Plays a role in the positive regulation of phagocytosis and pinocytosis. The sequence is that of Phosphatidylinositol 4,5-bisphosphate 3-kinase catalytic subunit alpha isoform (PIK3CA) from Bos taurus (Bovine).